The chain runs to 386 residues: Dual-specificity RNA methyltransferase RlmN (386 aa).

The Proton acceptor role is filled by glutamate 94. In terms of domain architecture, Radical SAM core spans 100-341; that stretch reads EENRGTLCIS…VTTIRKTRGD (242 aa). A disulfide bond links cysteine 107 and cysteine 347. Cysteine 114, cysteine 118, and cysteine 121 together coordinate [4Fe-4S] cluster. Residues 173–174, serine 205, 227–229, and asparagine 304 contribute to the S-adenosyl-L-methionine site; these read GE and SLH. Cysteine 347 (S-methylcysteine intermediate) is an active-site residue.

It belongs to the radical SAM superfamily. RlmN family. Requires [4Fe-4S] cluster as cofactor.

It is found in the cytoplasm. It catalyses the reaction adenosine(2503) in 23S rRNA + 2 reduced [2Fe-2S]-[ferredoxin] + 2 S-adenosyl-L-methionine = 2-methyladenosine(2503) in 23S rRNA + 5'-deoxyadenosine + L-methionine + 2 oxidized [2Fe-2S]-[ferredoxin] + S-adenosyl-L-homocysteine. The catalysed reaction is adenosine(37) in tRNA + 2 reduced [2Fe-2S]-[ferredoxin] + 2 S-adenosyl-L-methionine = 2-methyladenosine(37) in tRNA + 5'-deoxyadenosine + L-methionine + 2 oxidized [2Fe-2S]-[ferredoxin] + S-adenosyl-L-homocysteine. Functionally, specifically methylates position 2 of adenine 2503 in 23S rRNA and position 2 of adenine 37 in tRNAs. m2A2503 modification seems to play a crucial role in the proofreading step occurring at the peptidyl transferase center and thus would serve to optimize ribosomal fidelity. This Herminiimonas arsenicoxydans protein is Dual-specificity RNA methyltransferase RlmN.